Reading from the N-terminus, the 143-residue chain is MFLGSHTPRLDDKGRLTLPAKFREELEGGLVITKGQERCLYVFPLAEFTRISESLRTAPVTAKALRDYSRVFFSSASDDVPDRQGRITIPPPLRAYAGLVRECVVNGANTRVEIWDSQRWDTYLADQEETFAEMSEEVLPGVI.

2 SpoVT-AbrB domains span residues 5–47 (SHTP…PLAE) and 76–119 (ASDD…DSQR).

This sequence belongs to the MraZ family. In terms of assembly, forms oligomers.

It localises to the cytoplasm. Its subcellular location is the nucleoid. The polypeptide is Transcriptional regulator MraZ (Parafrankia sp. (strain EAN1pec)).